The primary structure comprises 473 residues: Adenosylhomocysteinase (473 aa).

Substrate contacts are provided by Thr60, Asp135, and Glu197. 198–200 (TTT) serves as a coordination point for NAD(+). The substrate site is built by Lys227 and Asp231. NAD(+)-binding positions include Asn232, 261–266 (GFGDVG), Glu284, Asn319, 340–342 (IGH), and Asn385.

The protein belongs to the adenosylhomocysteinase family. Requires NAD(+) as cofactor.

The protein resides in the cytoplasm. It catalyses the reaction S-adenosyl-L-homocysteine + H2O = L-homocysteine + adenosine. It participates in amino-acid biosynthesis; L-homocysteine biosynthesis; L-homocysteine from S-adenosyl-L-homocysteine: step 1/1. Its function is as follows. May play a key role in the regulation of the intracellular concentration of adenosylhomocysteine. The polypeptide is Adenosylhomocysteinase (Bradyrhizobium sp. (strain BTAi1 / ATCC BAA-1182)).